The primary structure comprises 163 residues: MAKESSFDIVSKVELPEVTNAINIALKEIQNRYDFKGSKSDIKLEKEVLVLTSDDAFKLDQVKDVLISKLVKRNVPIKNLDYGKVETASGNTVRQRATLQQGIDKDNAKKINNIIKEMKLKVKTQVQDDQVRVTAKSRDDLQAVIAAVRSVDLPIDVQFINYR.

It belongs to the YajQ family.

In terms of biological role, nucleotide-binding protein. This chain is Nucleotide-binding protein BcerKBAB4_1061, found in Bacillus mycoides (strain KBAB4) (Bacillus weihenstephanensis).